Consider the following 198-residue polypeptide: Chromophore lyase CpcT/CpeT 3 (198 aa).

Belongs to the CpcT/CpeT biliprotein lyase family.

Functionally, covalently attaches a chromophore to Cys residue(s) of phycobiliproteins. This Synechococcus sp. (strain JA-3-3Ab) (Cyanobacteria bacterium Yellowstone A-Prime) protein is Chromophore lyase CpcT/CpeT 3.